The sequence spans 30 residues: M-poneritoxin-Ng3a (30 aa).

In terms of tissue distribution, expressed by the venom gland.

Its subcellular location is the secreted. Its function is as follows. Shows a broad spectrum of activity against both Gram-positive and Gram-negative bacteria. Also has antimicrobial activity against S.cerevisiae. Has insecticidal and non-hemolytic activity. In Neoponera goeldii (Ponerine ant), this protein is M-poneritoxin-Ng3a.